Here is a 947-residue protein sequence, read N- to C-terminus: Glutamate receptor 2.8 (947 aa).

Residues 1-26 (MNPKKNNNTFLSYFVCLFLLLEVGLG) form the signal peptide. Over 27 to 577 (QNQISEIKVG…NTWVFLKPWG (551 aa)) the chain is Extracellular. N42, N118, N333, N341, N348, N420, N478, and N524 each carry an N-linked (GlcNAc...) asparagine glycan. A helical transmembrane segment spans residues 578–598 (LDLWVTTACFFVLIGFVVWLF). The Cytoplasmic portion of the chain corresponds to 599 to 607 (EHRVNTDFR). Residues 608-628 (GPPHHQIGTSFWFSFSTMVFA) form a helical membrane-spanning segment. Over 629-632 (HREK) the chain is Cytoplasmic. Residues 633-653 (VVSNLARFVVVVWCFVVLVLT) form a helical membrane-spanning segment. The Extracellular segment spans residues 654 to 819 (QSYTANLTSF…NRLSLRSFWG (166 aa)). Residues N659, N704, N723, and N779 are each glycosylated (N-linked (GlcNAc...) asparagine). A helical membrane pass occupies residues 820–840 (LFLIAGIASFLALLIFVFLFL). Residues 841–947 (YENRHTLCDD…ESDIECVVEQ (107 aa)) are Cytoplasmic-facing.

The protein belongs to the glutamate-gated ion channel (TC 1.A.10.1) family. May form heteromers. In terms of tissue distribution, expressed predominantly in leaves.

Its subcellular location is the membrane. Glutamate-gated receptor that probably acts as a non-selective cation channel. May be involved in light-signal transduction and calcium homeostasis via the regulation of calcium influx into cells. In Arabidopsis thaliana (Mouse-ear cress), this protein is Glutamate receptor 2.8 (GLR2.8).